Consider the following 351-residue polypeptide: UDP-glucose 4-epimerase 5 (351 aa).

NAD(+) contacts are provided by residues 13–15 (GYI), 34–38 (DNLDN), 64–65 (DL), phenylalanine 86, and lysine 90. Residue 130–132 (SAT) coordinates substrate. Catalysis depends on tyrosine 154, which acts as the Proton acceptor. Lysine 158 and tyrosine 182 together coordinate NAD(+). Residues 182–184 (YFN), 203–205 (NNL), 221–223 (TVF), arginine 236, and 298–301 (RPGD) contribute to the substrate site.

Belongs to the NAD(P)-dependent epimerase/dehydratase family. As to quaternary structure, forms homodimers and heterodimers. The cofactor is NAD(+). As to expression, widely expressed.

The enzyme catalyses UDP-alpha-D-glucose = UDP-alpha-D-galactose. It participates in carbohydrate metabolism; galactose metabolism. Its activity is regulated as follows. Enhanced activity by NaCl. Inhibited by UDP. Functionally, catalyzes the interconversion between UDP-glucose and UDP-galactose. This chain is UDP-glucose 4-epimerase 5, found in Arabidopsis thaliana (Mouse-ear cress).